The primary structure comprises 178 residues: Large ribosomal subunit protein uL6 (178 aa).

Belongs to the universal ribosomal protein uL6 family. As to quaternary structure, part of the 50S ribosomal subunit.

In terms of biological role, this protein binds to the 23S rRNA, and is important in its secondary structure. It is located near the subunit interface in the base of the L7/L12 stalk, and near the tRNA binding site of the peptidyltransferase center. This chain is Large ribosomal subunit protein uL6, found in Staphylococcus aureus (strain Mu3 / ATCC 700698).